We begin with the raw amino-acid sequence, 420 residues long: Probable 3-isopropylmalate dehydratase large subunit (420 aa).

Cys-301, Cys-361, and Cys-364 together coordinate [4Fe-4S] cluster.

The protein belongs to the aconitase/IPM isomerase family. LeuC type 2 subfamily. Heterodimer of LeuC and LeuD. Requires [4Fe-4S] cluster as cofactor.

The enzyme catalyses (2R,3S)-3-isopropylmalate = (2S)-2-isopropylmalate. Its pathway is amino-acid biosynthesis; L-leucine biosynthesis; L-leucine from 3-methyl-2-oxobutanoate: step 2/4. In terms of biological role, catalyzes the isomerization between 2-isopropylmalate and 3-isopropylmalate, via the formation of 2-isopropylmaleate. This chain is Probable 3-isopropylmalate dehydratase large subunit, found in Methanosarcina mazei (strain ATCC BAA-159 / DSM 3647 / Goe1 / Go1 / JCM 11833 / OCM 88) (Methanosarcina frisia).